We begin with the raw amino-acid sequence, 632 residues long: RNA-binding post-transcriptional regulator csx1 (632 aa).

S42 and S54 each carry phosphoserine; by MAPK sty1. Phosphoserine is present on residues S67 and S69. RRM domains follow at residues 85 to 167 (DTLW…WATG) and 182 to 261 (FSIF…VASP). Phosphoserine; by MAPK sty1 is present on S291. The RRM 3 domain maps to 297–369 (TTVFVGGLAS…SHIRLAWGHN (73 aa)). S455 carries the post-translational modification Phosphoserine; by MAPK sty1. The interval 456-476 (PPPLSRSASISPTLSGSGSGL) is disordered. Residues 466-476 (SPTLSGSGSGL) are compositionally biased toward low complexity.

Interacts with cip1 and cip2.

The protein localises to the cytoplasm. Functionally, regulates global gene expression after oxidative stress. Interacts and stabilizes atf1 and pcr1 mRNAs after oxidative stress, thus controlling their turnover. The polypeptide is RNA-binding post-transcriptional regulator csx1 (csx1) (Schizosaccharomyces pombe (strain 972 / ATCC 24843) (Fission yeast)).